Consider the following 196-residue polypeptide: Segregation and condensation protein B (196 aa).

It belongs to the ScpB family. In terms of assembly, homodimer. Homodimerization may be required to stabilize the binding of ScpA to the Smc head domains. Component of a cohesin-like complex composed of ScpA, ScpB and the Smc homodimer, in which ScpA and ScpB bind to the head domain of Smc. The presence of the three proteins is required for the association of the complex with DNA.

It localises to the cytoplasm. Participates in chromosomal partition during cell division. May act via the formation of a condensin-like complex containing Smc and ScpA that pull DNA away from mid-cell into both cell halves. In Pediococcus pentosaceus (strain ATCC 25745 / CCUG 21536 / LMG 10740 / 183-1w), this protein is Segregation and condensation protein B.